The chain runs to 155 residues: Ribonuclease H (155 aa).

One can recognise an RNase H type-1 domain in the interval 1–143; it reads MNQVEIYTDG…ADALANRGVD (143 aa). The Mg(2+) site is built by Asp-9, Glu-47, Asp-69, and Asp-135.

It belongs to the RNase H family. As to quaternary structure, monomer. The cofactor is Mg(2+).

Its subcellular location is the cytoplasm. The enzyme catalyses Endonucleolytic cleavage to 5'-phosphomonoester.. In terms of biological role, endonuclease that specifically degrades the RNA of RNA-DNA hybrids. The protein is Ribonuclease H of Verminephrobacter eiseniae (strain EF01-2).